The chain runs to 424 residues: UDP-N-acetylglucosamine 1-carboxyvinyltransferase (424 aa).

Position 22–23 (lysine 22–asparagine 23) interacts with phosphoenolpyruvate. Arginine 93 serves as a coordination point for UDP-N-acetyl-alpha-D-glucosamine. Cysteine 117 (proton donor) is an active-site residue. The residue at position 117 (cysteine 117) is a 2-(S-cysteinyl)pyruvic acid O-phosphothioketal. Residues lysine 162–valine 165, aspartate 307, and isoleucine 329 contribute to the UDP-N-acetyl-alpha-D-glucosamine site.

Belongs to the EPSP synthase family. MurA subfamily.

It localises to the cytoplasm. It carries out the reaction phosphoenolpyruvate + UDP-N-acetyl-alpha-D-glucosamine = UDP-N-acetyl-3-O-(1-carboxyvinyl)-alpha-D-glucosamine + phosphate. It functions in the pathway cell wall biogenesis; peptidoglycan biosynthesis. Cell wall formation. Adds enolpyruvyl to UDP-N-acetylglucosamine. This chain is UDP-N-acetylglucosamine 1-carboxyvinyltransferase, found in Actinobacillus pleuropneumoniae serotype 5b (strain L20).